A 469-amino-acid polypeptide reads, in one-letter code: Calcium-binding mitochondrial carrier protein SCaMC-2 (469 aa).

Residues 1 to 189 are Mitochondrial intermembrane-facing; sequence MLCLCLYVPL…ERQTGMWWRH (189 aa). EF-hand domains lie at 47–80, 78–113, and 114–149; these read TYRQ…QDHE, DHEK…LGVK, and ISEQ…HPVE. Ca(2+) contacts are provided by Asp60, Asp62, Asp64, Gln66, and Glu71. 3 Solcar repeats span residues 184 to 270, 278 to 363, and 375 to 463; these read GMWW…IKRL, LRIH…LKNA, and PGVF…LKIT. A helical transmembrane segment spans residues 190–207; the sequence is LVAGGGAGAVSRTCTAPL. Residues 208–244 are Mitochondrial matrix-facing; that stretch reads DRLKVLMQVHASRSNNMCIVGGFTQMIREGGARSLWR. A helical transmembrane segment spans residues 245-264; that stretch reads GNGINVLKIAPESAIKFMAY. Residues 265-287 lie on the Mitochondrial intermembrane side of the membrane; sequence EQIKRLIGSDQETLRIHERLVAG. Residues 288–301 form a helical membrane-spanning segment; that stretch reads SLAGAIAQSSIYPM. Over 302 to 337 the chain is Mitochondrial matrix; that stretch reads EVLKTRMALRKTGQYSGMLDCARKILAREGMAAFYK. The chain crosses the membrane as a helical span at residues 338-357; the sequence is GYVPNMLGIIPYAGIDLAVY. The Mitochondrial intermembrane segment spans residues 358–380; that stretch reads ETLKNAWLQRYAVNSADPGVFVL. Residues 381-398 form a helical membrane-spanning segment; it reads LACGTMSSTCGQLASYPL. Residues 399-437 are Mitochondrial matrix-facing; sequence ALVRTRMQAQASMEGAPEVTMSSLFKQILRTEGAFGLYR. A helical transmembrane segment spans residues 438 to 457; that stretch reads GLAPNFMKVIPAVSISYVVY. Over 458–469 the chain is Mitochondrial intermembrane; the sequence is ENLKITLGVQSR.

The protein belongs to the mitochondrial carrier (TC 2.A.29) family.

Its subcellular location is the mitochondrion inner membrane. Functionally, calcium-dependent mitochondrial solute carrier. Mitochondrial solute carriers shuttle metabolites, nucleotides, and cofactors through the mitochondrial inner membrane. May act as a ATP-Mg/Pi exchanger that mediates the transport of Mg-ATP in exchange for phosphate, catalyzing the net uptake or efflux of adenine nucleotides into or from the mitochondria. The sequence is that of Calcium-binding mitochondrial carrier protein SCaMC-2 (SLC25A25) from Bos taurus (Bovine).